The primary structure comprises 357 residues: Membrane-bound lytic murein transglycosylase C (357 aa).

Positions 1–16 (MKKLLALFVIAPILIS) are cleaved as a signal peptide. Residue cysteine 17 is the site of N-palmitoyl cysteine attachment. Cysteine 17 carries S-diacylglycerol cysteine lipidation.

Belongs to the transglycosylase Slt family.

Its subcellular location is the cell outer membrane. The enzyme catalyses Exolytic cleavage of the (1-&gt;4)-beta-glycosidic linkage between N-acetylmuramic acid (MurNAc) and N-acetylglucosamine (GlcNAc) residues in peptidoglycan, from either the reducing or the non-reducing ends of the peptidoglycan chains, with concomitant formation of a 1,6-anhydrobond in the MurNAc residue.. Murein-degrading enzyme. May play a role in recycling of muropeptides during cell elongation and/or cell division. This chain is Membrane-bound lytic murein transglycosylase C, found in Photorhabdus laumondii subsp. laumondii (strain DSM 15139 / CIP 105565 / TT01) (Photorhabdus luminescens subsp. laumondii).